A 124-amino-acid polypeptide reads, in one-letter code: Large ribosomal subunit protein bL21 (124 aa).

The protein belongs to the bacterial ribosomal protein bL21 family. Part of the 50S ribosomal subunit. Contacts protein L20.

In terms of biological role, this protein binds to 23S rRNA in the presence of protein L20. The polypeptide is Large ribosomal subunit protein bL21 (Synechocystis sp. (strain ATCC 27184 / PCC 6803 / Kazusa)).